Reading from the N-terminus, the 284-residue chain is Signal peptidase I (284 aa).

Residues 4–22 form a helical membrane-spanning segment; sequence NFPLLLVIAVAVCGLLALL. Topologically, residues 23 to 58 are cytoplasmic; sequence DLVFFAPRRRSAIASYQGSVSQPDAVVIEKLNKEPL. A helical membrane pass occupies residues 59-77; it reads LVEYGKSFFPVLFIVLVLR. At 78-284 the chain is on the periplasmic side; the sequence is SFLVEPFQIP…PNFSRVGLIK (207 aa). Catalysis depends on residues Ser90 and Lys145.

This sequence belongs to the peptidase S26 family.

It localises to the cell inner membrane. The catalysed reaction is Cleavage of hydrophobic, N-terminal signal or leader sequences from secreted and periplasmic proteins.. In Pseudomonas fluorescens, this protein is Signal peptidase I (lepB).